The chain runs to 282 residues: 4-hydroxy-3-methylbut-2-enyl diphosphate reductase (282 aa).

Cys14 contributes to the [4Fe-4S] cluster binding site. Residues His43 and His78 each coordinate (2E)-4-hydroxy-3-methylbut-2-enyl diphosphate. Positions 43 and 78 each coordinate dimethylallyl diphosphate. Isopentenyl diphosphate-binding residues include His43 and His78. Cys100 contributes to the [4Fe-4S] cluster binding site. His128 is a binding site for (2E)-4-hydroxy-3-methylbut-2-enyl diphosphate. His128 lines the dimethylallyl diphosphate pocket. His128 lines the isopentenyl diphosphate pocket. Glu130 serves as the catalytic Proton donor. Thr164 is a (2E)-4-hydroxy-3-methylbut-2-enyl diphosphate binding site. Residue Cys192 participates in [4Fe-4S] cluster binding. Residues Ser220, Ser221, Asn222, and Ser266 each coordinate (2E)-4-hydroxy-3-methylbut-2-enyl diphosphate. Dimethylallyl diphosphate-binding residues include Ser220, Ser221, Asn222, and Ser266. The isopentenyl diphosphate site is built by Ser220, Ser221, Asn222, and Ser266.

The protein belongs to the IspH family. It depends on [4Fe-4S] cluster as a cofactor.

The catalysed reaction is isopentenyl diphosphate + 2 oxidized [2Fe-2S]-[ferredoxin] + H2O = (2E)-4-hydroxy-3-methylbut-2-enyl diphosphate + 2 reduced [2Fe-2S]-[ferredoxin] + 2 H(+). The enzyme catalyses dimethylallyl diphosphate + 2 oxidized [2Fe-2S]-[ferredoxin] + H2O = (2E)-4-hydroxy-3-methylbut-2-enyl diphosphate + 2 reduced [2Fe-2S]-[ferredoxin] + 2 H(+). It participates in isoprenoid biosynthesis; dimethylallyl diphosphate biosynthesis; dimethylallyl diphosphate from (2E)-4-hydroxy-3-methylbutenyl diphosphate: step 1/1. It functions in the pathway isoprenoid biosynthesis; isopentenyl diphosphate biosynthesis via DXP pathway; isopentenyl diphosphate from 1-deoxy-D-xylulose 5-phosphate: step 6/6. Functionally, catalyzes the conversion of 1-hydroxy-2-methyl-2-(E)-butenyl 4-diphosphate (HMBPP) into a mixture of isopentenyl diphosphate (IPP) and dimethylallyl diphosphate (DMAPP). Acts in the terminal step of the DOXP/MEP pathway for isoprenoid precursor biosynthesis. The chain is 4-hydroxy-3-methylbut-2-enyl diphosphate reductase from Clostridium perfringens (strain SM101 / Type A).